Consider the following 152-residue polypeptide: Ribosome maturation factor RimP (152 aa).

This sequence belongs to the RimP family.

The protein resides in the cytoplasm. Its function is as follows. Required for maturation of 30S ribosomal subunits. This chain is Ribosome maturation factor RimP, found in Photorhabdus laumondii subsp. laumondii (strain DSM 15139 / CIP 105565 / TT01) (Photorhabdus luminescens subsp. laumondii).